We begin with the raw amino-acid sequence, 86 residues long: MANIKSQIKRIRTNEKARQRNKAYKSELKTHVRKVREAVTAGDKETASDALQVASRKLDKAVSKGVIHKNQAANRKSALAKQVSGL.

The tract at residues 1–25 (MANIKSQIKRIRTNEKARQRNKAYK) is disordered. Residues 12–25 (RTNEKARQRNKAYK) show a composition bias toward basic and acidic residues.

This sequence belongs to the bacterial ribosomal protein bS20 family.

Binds directly to 16S ribosomal RNA. This chain is Small ribosomal subunit protein bS20, found in Beutenbergia cavernae (strain ATCC BAA-8 / DSM 12333 / CCUG 43141 / JCM 11478 / NBRC 16432 / NCIMB 13614 / HKI 0122).